We begin with the raw amino-acid sequence, 662 residues long: Probable quinol oxidase subunit 1 (662 aa).

The next 2 helical transmembrane spans lie at 14–34 (WMITMAQIGAPFLVIGLIAVI) and 58–78 (IMYLICAVLMFVRGGIDALLI). Histidine 102 is a binding site for Fe(II)-heme a. 8 helical membrane passes run 103–123 (GVIMIIFMAMPFIFGLWNIVV), 140–160 (VSFWLFFAGMILFNLSFIIGG), 187–207 (IAIQISGLGTLATGINFFVTI), 228–248 (FITTLIVILAFPPLTVALALM), 273–293 (FFWVWGHPEVYIVILPAFGIY), 311–331 (MVWATAGIAFLSFLVWVHHFF), 336–356 (GALINSFFSISTMLIGIPTGV), and 376–396 (MLFSLAFIPNFLLGGVTGVML). Cu cation-binding residues include histidine 279, tyrosine 283, histidine 328, and histidine 329. Residues 279–283 (HPEVY) constitute a cross-link (1'-histidyl-3'-tyrosine (His-Tyr)). Heme a3 is bound at residue histidine 414. A run of 5 helical transmembrane segments spans residues 415 to 435 (FHYTLVTGVVFACLAGLIFWY), 451 to 471 (CFWFFMIGFNVCFLPQFILGL), 493 to 513 (ISTIGALLMAIGFLFLVVSIV), 587 to 604 (PVGFWIGIFMTIGGFFLI), and 608 to 627 (VIPALICLFGIFGTMIYRSF). Histidine 416 contacts Fe(II)-heme a.

This sequence belongs to the heme-copper respiratory oxidase family. The cofactor is Cu cation. Requires ferriheme a as cofactor. Heme A3. is required as a cofactor.

It localises to the cell membrane. The catalysed reaction is 2 a quinol + O2 = 2 a quinone + 2 H2O. The protein operates within energy metabolism; oxidative phosphorylation. Its function is as follows. Catalyzes quinol oxidation with the concomitant reduction of oxygen to water. In Staphylococcus aureus (strain USA300), this protein is Probable quinol oxidase subunit 1 (qoxB).